A 118-amino-acid polypeptide reads, in one-letter code: MAHLTQSVEYASTACCWLAGGRHAAEQPGSGGIAGNLPAPSSPRSFRSWRRRGSSRPAKGSRVTACQGAGRPSASSSSSTPSRARSRCCECQEIRGRCAVFDDRPPDWATSASAPSTP.

Residues 25–85 (AEQPGSGGIA…SSSSTPSRAR (61 aa)) are disordered. Positions 71 to 83 (RPSASSSSSTPSR) are enriched in low complexity.

This is an uncharacterized protein from Azospirillum brasilense.